Here is a 94-residue protein sequence, read N- to C-terminus: Small ribosomal subunit protein uS19 (94 aa).

This sequence belongs to the universal ribosomal protein uS19 family.

Functionally, protein S19 forms a complex with S13 that binds strongly to the 16S ribosomal RNA. In Dictyoglomus thermophilum (strain ATCC 35947 / DSM 3960 / H-6-12), this protein is Small ribosomal subunit protein uS19.